A 505-amino-acid chain; its full sequence is Putative F-box protein At1g58310 (505 aa).

Residues 7 to 55 (RDIISGLPDSLLCHILSFLNTKEAASTSVLAKKWRYLFASVPNLDFDDS) form the F-box domain.

This is Putative F-box protein At1g58310 from Arabidopsis thaliana (Mouse-ear cress).